Reading from the N-terminus, the 55-residue chain is Large ribosomal subunit protein bL33 (55 aa).

The protein belongs to the bacterial ribosomal protein bL33 family.

The sequence is that of Large ribosomal subunit protein bL33 from Gluconacetobacter diazotrophicus (strain ATCC 49037 / DSM 5601 / CCUG 37298 / CIP 103539 / LMG 7603 / PAl5).